Here is a 657-residue protein sequence, read N- to C-terminus: Methyl-accepting chemotaxis protein CtpL (657 aa).

The Cytoplasmic segment spans residues 1–5 (MRLKQ). Residues 6–26 (LTNLNTLLLLTVCLALGITLW) traverse the membrane as a helical segment. Residues 27 to 305 (WSQRAMERPF…ERQRLQGQVR (279 aa)) are Periplasmic-facing. Residues 306–326 (LIQGGMIALILLIALAIDSLQ) traverse the membrane as a helical segment. The HAMP domain occupies 327-380 (RRLARVLGQLVPALSAWADGDFSRPISLRTRTEDLRNLEDSLNRLRSFLAELVG). Residues 327-657 (RRLARVLGQL…LRTTVQAFRL (331 aa)) lie on the Cytoplasmic side of the membrane. Residues 385 to 621 (RAEQVAGSSQ…EIRSHSERIH (237 aa)) enclose the Methyl-accepting transducer domain.

It belongs to the methyl-accepting chemotaxis (MCP) protein family.

It is found in the cell inner membrane. In terms of biological role, chemotactic-signal transducers respond to changes in the concentration of attractants and repellents in the environment, transduce a signal from the outside to the inside of the cell, and facilitate sensory adaptation through the variation of the level of methylation. Chemoreceptor for inorganic phosphate, which is required for taxis at low concentrations of phosphate. Is also responsible for the positive chemotaxis toward 4-chloroaniline (4CA) and catechol. Does not recognize inorganic phosphate directly, but via a complex between the periplasmic protein PstS and inorganic phosphate. This Pseudomonas aeruginosa (strain ATCC 15692 / DSM 22644 / CIP 104116 / JCM 14847 / LMG 12228 / 1C / PRS 101 / PAO1) protein is Methyl-accepting chemotaxis protein CtpL.